The following is a 123-amino-acid chain: Large ribosomal subunit protein eL8 (123 aa).

The protein belongs to the eukaryotic ribosomal protein eL8 family. Part of the 50S ribosomal subunit. Probably part of the RNase P complex.

Its subcellular location is the cytoplasm. In terms of biological role, multifunctional RNA-binding protein that recognizes the K-turn motif in ribosomal RNA, the RNA component of RNase P, box H/ACA, box C/D and box C'/D' sRNAs. The protein is Large ribosomal subunit protein eL8 of Thermococcus kodakarensis (strain ATCC BAA-918 / JCM 12380 / KOD1) (Pyrococcus kodakaraensis (strain KOD1)).